A 1038-amino-acid polypeptide reads, in one-letter code: Importin-7 (1038 aa).

N-acetylmethionine is present on Met-1. The region spanning 22–101 is the Importin N-terminal domain; the sequence is AERQLNEAHK…RENIVEAIIH (80 aa). The interval 881-910 is disordered; that stretch reads EHENDSDDDDEAEDDDETEELGSDEDDIDE. Positions 884-910 are enriched in acidic residues; it reads NDSDDDDEAEDDDETEELGSDEDDIDE. Position 886 is a phosphoserine (Ser-886). Thr-898 is subject to Phosphothreonine. Ser-903 and Ser-1020 each carry phosphoserine.

Belongs to the importin beta family. Forms a heterodimer with KPNB1. Interacts with histone H1. Interacts with H2A, H2B, H3 and H4 histones. Interacts with SNUPN and XPO1. Interacts with RPS7 and RPL5. Interacts with RPL23A (via BIB domain). Binds directly to nuclear pore complexes. Interacts with SMAD4 and NUP93; translocates SMAD4 to the nucleus through the NPC upon BMP7 stimulation resulting in activation of SMAD4 signaling. Interacts with phosphorylated SMAD2; the interaction facilitates translocation of SMAD2 to the nucleus. Interacts with SRP19. Interacts with RUNX2; the interaction inhibits RUNX2 nuclear translocation in osteoblasts. Interacts with HDAC6, DLX3 and KLF4; the interaction facilitates HDAC6, DLX3 and KLF4 nuclear translocation in dental papilla cells. As to quaternary structure, (Microbial infection) Interacts with HIV-1 reverse transcription complex integrase and rev.

It is found in the cytoplasm. The protein localises to the nucleus. Its function is as follows. Functions in nuclear protein import, either by acting as autonomous nuclear transport receptor or as an adapter-like protein in association with the importin-beta subunit KPNB1. Acting autonomously, is thought to serve itself as receptor for nuclear localization signals (NLS) and to promote translocation of import substrates through the nuclear pore complex (NPC) by an energy requiring, Ran-dependent mechanism. At the nucleoplasmic side of the NPC, Ran binds to importin, the importin/substrate complex dissociates and importin is re-exported from the nucleus to the cytoplasm where GTP hydrolysis releases Ran. The directionality of nuclear import is thought to be conferred by an asymmetric distribution of the GTP- and GDP-bound forms of Ran between the cytoplasm and nucleus. Mediates autonomously the nuclear import of ribosomal proteins RPL23A, RPS7 and RPL5. In association with KPNB1 mediates the nuclear import of H1 histone and the Ran-binding site of IPO7 is not required but synergizes with that of KPNB1 in importin/substrate complex dissociation. Promotes odontoblast differentiation via promoting nuclear translocation of DLX3, KLF4, SMAD2, thereby facilitating the transcription of target genes that play a role in odontoblast differentiation. Facilitates BMP4-induced translocation of SMAD1 to the nucleus and recruitment to the MSX1 gene promoter, thereby promotes the expression of the odontogenic regulator MSX1 in dental mesenchymal cells. Also promotes odontoblast differentiation by facilitating the nuclear translocation of HDAC6 and subsequent repression of RUNX2 expression. Inhibits osteoblast differentiation by inhibiting nuclear translocation of RUNX2 and therefore inhibition of RUNX2 target gene transcription. In vitro, mediates nuclear import of H2A, H2B, H3 and H4 histones. Functionally, (Microbial infection) Mediates the nuclear import of HIV-1 reverse transcription complex (RTC) integrase. Binds and mediates the nuclear import of HIV-1 Rev. The protein is Importin-7 (IPO7) of Homo sapiens (Human).